We begin with the raw amino-acid sequence, 606 residues long: Transcription factor glial cells missing 2 (606 aa).

A compositionally biased stretch (polar residues) spans 20–37 (DHSQLTQFVQPQSQSTHS). Disordered regions lie at residues 20 to 65 (DHSQ…KGKR), 475 to 501 (EMQQHHHQQQQSHQQFGGNQTAGHHYY), and 561 to 606 (TAPT…SVTH). Residues 44 to 61 (PGQQQAGGSMTMPSSSTG) are compositionally biased toward low complexity. Positions 65–224 (REWDINDAIV…KNSSVSKRAF (160 aa)) form a DNA-binding region, GCM. A compositionally biased stretch (polar residues) spans 490 to 501 (FGGNQTAGHHYY). The segment covering 569–580 (PGHPPPPPPPPT) has biased composition (pro residues). The segment covering 583–593 (YHHHHHHHLHH) has biased composition (basic residues). Residues 594-606 (PAAATGLAPSVTH) show a composition bias toward low complexity.

Expressed in glial lineages within embryonic procephalic mesoderm. Expression is highest in hemocyte primordia and longitudinal and nerve root ganglia.

It localises to the nucleus. Transcription factor with a minor role promoting glial cell differentiation and a more significant role in hematocyte differentiation. Gcm2, together with gcm, is required for the proliferation of plasmatocyte precursors, the expression of Croquemort protein, and the ability of plasmatocytes to convert into macrophages. This chain is Transcription factor glial cells missing 2 (gcm2), found in Drosophila melanogaster (Fruit fly).